The primary structure comprises 948 residues: RNA polymerase-associated protein RapA (948 aa).

The Helicase ATP-binding domain maps to 164–332 (EVADRSAPRV…FARLRLLDPN (169 aa)). 177–184 (DEVGLGKT) lines the ATP pocket. Residues 278 to 281 (DEAH) carry the DEAH box motif. The Helicase C-terminal domain occupies 473-627 (RVDWLIDTLK…TCPTGNALQH (155 aa)).

It belongs to the SNF2/RAD54 helicase family. RapA subfamily. As to quaternary structure, interacts with the RNAP. Has a higher affinity for the core RNAP than for the holoenzyme. Its ATPase activity is stimulated by binding to RNAP.

Functionally, transcription regulator that activates transcription by stimulating RNA polymerase (RNAP) recycling in case of stress conditions such as supercoiled DNA or high salt concentrations. Probably acts by releasing the RNAP, when it is trapped or immobilized on tightly supercoiled DNA. Does not activate transcription on linear DNA. Probably not involved in DNA repair. This is RNA polymerase-associated protein RapA from Pseudomonas putida (strain ATCC 700007 / DSM 6899 / JCM 31910 / BCRC 17059 / LMG 24140 / F1).